A 160-amino-acid chain; its full sequence is Cytochrome b6-f complex subunit 4 (160 aa).

The next 3 helical transmembrane spans lie at 36-56 (LLYI…GLAV), 95-115 (LLGI…PFIE), and 128-148 (IAMA…IGAC).

This sequence belongs to the cytochrome b family. PetD subfamily. As to quaternary structure, the 4 large subunits of the cytochrome b6-f complex are cytochrome b6, subunit IV (17 kDa polypeptide, PetD), cytochrome f and the Rieske protein, while the 4 small subunits are PetG, PetL, PetM and PetN. The complex functions as a dimer.

It is found in the cellular thylakoid membrane. Component of the cytochrome b6-f complex, which mediates electron transfer between photosystem II (PSII) and photosystem I (PSI), cyclic electron flow around PSI, and state transitions. This Prochlorococcus marinus (strain MIT 9313) protein is Cytochrome b6-f complex subunit 4.